The sequence spans 268 residues: Xyloglucan endotransglucosylase protein 7 (268 aa).

In terms of domain architecture, GH16 spans 1 to 196 (MNAEGGNLHR…WTKAPFTASY (196 aa)). Catalysis depends on E82, which acts as the Nucleophile. E86 (proton donor) is an active-site residue. A xyloglucan-binding site is contributed by E86. An N-linked (GlcNAc...) asparagine glycan is attached at N90. Xyloglucan contacts are provided by residues 99–101 (HTN), 109–111 (NRE), 175–176 (DW), and G180. Disulfide bonds link C204/C213 and C251/C265. R256 is a xyloglucan binding site.

Belongs to the glycosyl hydrolase 16 family. XTH group 2 subfamily. Post-translationally, contains at least one intrachain disulfide bond essential for its enzymatic activity. In terms of tissue distribution, expressed at a very high level in flowers and stems (picked at anthesis), and at a lower level in ripe leaves and fruits.

The protein localises to the cytoplasm. It catalyses the reaction breaks a beta-(1-&gt;4) bond in the backbone of a xyloglucan and transfers the xyloglucanyl segment on to O-4 of the non-reducing terminal glucose residue of an acceptor, which can be a xyloglucan or an oligosaccharide of xyloglucan.. Functionally, catalyzes xyloglucan endotransglycosylation (XET). Cleaves and religates xyloglucan polymers. Does not catalyze xyloglucan endohydrolysis (XEH). Probably involved in cell wall assembly and synthesis in fast growing tissues and in the maintenance of firmness in mature fruits. In Diospyros kaki (Kaki persimmon), this protein is Xyloglucan endotransglucosylase protein 7.